The chain runs to 131 residues: SPbeta prophage-derived uncharacterized protein YosD (131 aa).

The tract at residues 102–131 (EHNNKKAKNNDTQNQRQIKTSWWQRLTKKD) is disordered. Positions 111–125 (NDTQNQRQIKTSWWQ) are enriched in polar residues.

This chain is SPbeta prophage-derived uncharacterized protein YosD (yosD), found in Bacillus subtilis (strain 168).